The sequence spans 104 residues: Thioredoxin (104 aa).

The region spanning 2 to 104 is the Thioredoxin domain; it reads AIVKVTDSNF…NLAEVLDKHL (103 aa). A disulfide bridge links cysteine 29 with cysteine 32.

It belongs to the thioredoxin family.

Functionally, component of the thioredoxin-thioredoxin reductase system. Participates in various redox reactions through the reversible oxidation of its active center dithiol to a disulfide and catalyzes dithiol-disulfide exchange reactions. The sequence is that of Thioredoxin (trxA) from Staphylococcus haemolyticus (strain JCSC1435).